The chain runs to 124 residues: MARILGIDIPNQKRIEIALTYIFGIGLSRSQAILKQANINPDKRVKDLTEEEFVAIRNVASAYKIEGDLRREIALNIKHLSEIGAWRGLRHRKNLPVRGQRTRTNARTRKGPRKTVANKKIESK.

A compositionally biased stretch (basic residues) spans 94 to 117; that stretch reads NLPVRGQRTRTNARTRKGPRKTVA. Positions 94-124 are disordered; sequence NLPVRGQRTRTNARTRKGPRKTVANKKIESK.

It belongs to the universal ribosomal protein uS13 family. Part of the 30S ribosomal subunit. Forms a loose heterodimer with protein S19. Forms two bridges to the 50S subunit in the 70S ribosome.

Functionally, located at the top of the head of the 30S subunit, it contacts several helices of the 16S rRNA. In the 70S ribosome it contacts the 23S rRNA (bridge B1a) and protein L5 of the 50S subunit (bridge B1b), connecting the 2 subunits; these bridges are implicated in subunit movement. Contacts the tRNAs in the A and P-sites. In Mycoplasma pneumoniae (strain ATCC 29342 / M129 / Subtype 1) (Mycoplasmoides pneumoniae), this protein is Small ribosomal subunit protein uS13.